We begin with the raw amino-acid sequence, 217 residues long: Pyridoxine/pyridoxamine 5'-phosphate oxidase (217 aa).

Residues 13 to 16 (RREY) and Lys71 contribute to the substrate site. FMN is bound by residues 66–71 (RIVLLK), 81–82 (YT), Arg87, Lys88, and Gln110. Substrate-binding residues include Tyr128, Arg132, and Ser136. FMN contacts are provided by residues 145–146 (QS) and Trp190. Residue 196 to 198 (RLH) participates in substrate binding. Arg200 contributes to the FMN binding site.

Belongs to the pyridoxamine 5'-phosphate oxidase family. In terms of assembly, homodimer. The cofactor is FMN.

It carries out the reaction pyridoxamine 5'-phosphate + O2 + H2O = pyridoxal 5'-phosphate + H2O2 + NH4(+). The enzyme catalyses pyridoxine 5'-phosphate + O2 = pyridoxal 5'-phosphate + H2O2. It participates in cofactor metabolism; pyridoxal 5'-phosphate salvage; pyridoxal 5'-phosphate from pyridoxamine 5'-phosphate: step 1/1. The protein operates within cofactor metabolism; pyridoxal 5'-phosphate salvage; pyridoxal 5'-phosphate from pyridoxine 5'-phosphate: step 1/1. In terms of biological role, catalyzes the oxidation of either pyridoxine 5'-phosphate (PNP) or pyridoxamine 5'-phosphate (PMP) into pyridoxal 5'-phosphate (PLP). In Proteus mirabilis (strain HI4320), this protein is Pyridoxine/pyridoxamine 5'-phosphate oxidase.